Here is a 247-residue protein sequence, read N- to C-terminus: uncharacterized protein (247 aa).

The next 2 membrane-spanning stretches (helical) occupy residues 11 to 31 (LIAP…IYCV) and 39 to 59 (FIAI…TGLL).

Its subcellular location is the cell membrane. This is an uncharacterized protein from Haemophilus influenzae (strain ATCC 51907 / DSM 11121 / KW20 / Rd).